The sequence spans 333 residues: Ketol-acid reductoisomerase (NADP(+)) (333 aa).

In terms of domain architecture, KARI N-terminal Rossmann spans 2 to 182 (ANIYYDADCD…GGGRAGILET (181 aa)). Residues 25–28 (YGSQ), Lys48, Ser51, Ser53, and 83–86 (DTIQ) each bind NADP(+). His108 is an active-site residue. Gly134 is an NADP(+) binding site. Positions 183–331 (SFREETETDL…KKLRSMMKWL (149 aa)) constitute a KARI C-terminal knotted domain. Mg(2+) contacts are provided by Asp191, Glu195, Glu227, and Glu231. Ser252 is a substrate binding site.

Belongs to the ketol-acid reductoisomerase family. It depends on Mg(2+) as a cofactor.

It carries out the reaction (2R)-2,3-dihydroxy-3-methylbutanoate + NADP(+) = (2S)-2-acetolactate + NADPH + H(+). It catalyses the reaction (2R,3R)-2,3-dihydroxy-3-methylpentanoate + NADP(+) = (S)-2-ethyl-2-hydroxy-3-oxobutanoate + NADPH + H(+). Its pathway is amino-acid biosynthesis; L-isoleucine biosynthesis; L-isoleucine from 2-oxobutanoate: step 2/4. The protein operates within amino-acid biosynthesis; L-valine biosynthesis; L-valine from pyruvate: step 2/4. Its function is as follows. Involved in the biosynthesis of branched-chain amino acids (BCAA). Catalyzes an alkyl-migration followed by a ketol-acid reduction of (S)-2-acetolactate (S2AL) to yield (R)-2,3-dihydroxy-isovalerate. In the isomerase reaction, S2AL is rearranged via a Mg-dependent methyl migration to produce 3-hydroxy-3-methyl-2-ketobutyrate (HMKB). In the reductase reaction, this 2-ketoacid undergoes a metal-dependent reduction by NADPH to yield (R)-2,3-dihydroxy-isovalerate. The chain is Ketol-acid reductoisomerase (NADP(+)) from Leptospira borgpetersenii serovar Hardjo-bovis (strain JB197).